The sequence spans 887 residues: MNSGGGGGLPPPSAAASPSSSSLAAAVAVAVAASSGVGGVPGGPAAAAGVKLKYCRYYAKDKTCFYGEECQFLHEDPAAGAAPGLGLHSNSVPLALAAAAGAAFPPGALPGGGAGPPAGPKKPELGVPGAATAGGGLDGPRVAIPGMDGGALTDASLTESYFSTSFIGVNGFGSPVETKYPLMQRMTSSSSSPSLLNDSAKPYTGHDLLTSSASSLFNDFGALNISQRRKPRKYRLGMLEERLVPMGSQARKAKNPLGCLADRCESGVPVSMVWWDRVPENNLQTPNPTASEFIPKGGSTSRLSNVSQSNMSAFSQVFSHPSMGSPATAGLAPGMSLSAGSSPLHSPKITPHTSPAPRRRSHTPNPASFMVPPSASTPANNPAPQPPSSGQVIQKETVGGTTYFYTDTTPAPLTGMVFPNYHIYPPTAPHVAYMQPKANAPSFFMADELRQELINRHLITMAQIDQADMPAVPTEVDSYHSLFPLEPLPPPNRIQKSSNFGYITSCYKAVNSKDDLPYCLRRIHGFRLVNTKCMVLVDMWKKIQHSNIVTLREVFTTKAFAEPSLVFAYDFHAGGETMMSRHFNDPNSDAYFTKRKWGQHDGPLPRQHAGLLPESLIWAYIVQLSSALRTIHTAGLACRVMDPTKILITSKTRLRVNCVGVFDVLTFDNSQNNNPLALMAQYQQADLISLGKVVLALACNSLAGIQRENLQKAMELVTINYSSDLKNLILYLLTDQNRMRSVNDIMPMIGARFYTQLDAAQMRNDVIEEDLAKEVQNGRLFRLLAKLGTINERPEFQKDPTWSETGDRYLLKLFRDHLFHQVTEAGAPWIDLSHIISCLNKLDAGVPEKISLISRDEKSVLVVTYSDLKRCFENTFQELIAAANGQL.

Residues 49–77 form a C3H1-type zinc finger; that stretch reads GVKLKYCRYYAKDKTCFYGEECQFLHEDP. Disordered regions lie at residues 111–139, 280–307, and 321–393; these read GGGAGPPAGPKKPELGVPGAATAGGGLDG, ENNLQTPNPTASEFIPKGGSTSRLSNVS, and PSMG…GQVI. The necessary and sufficient for interaction with PABPC1 but not needed for interaction with PAN2 stretch occupies residues 147 to 498; that stretch reads MDGGALTDAS…PPPNRIQKSS (352 aa). 2 stretches are compositionally biased toward polar residues: residues 281–290 and 298–307; these read NNLQTPNPTA and GSTSRLSNVS. The short motif at 284–299 is the PABPC-interacting motif-2 (PAM-2) element; the sequence is QTPNPTASEFIPKGGS. Serine 354 and serine 361 each carry phosphoserine. Positions 463-750 are pseudokinase domain; that stretch reads QIDQADMPAV…SVNDIMPMIG (288 aa). ATP is bound by residues arginine 521, 570–577, and 644–645; these read DFHAGGET and TK. Positions 789–887 are knob domain; it reads TINERPEFQK…ELIAAANGQL (99 aa).

The protein belongs to the protein kinase superfamily. PAN3 family. In terms of assembly, homodimer. Forms a heterotrimer with a catalytic subunit PAN2 to form the poly(A)-nuclease (PAN) deadenylation complex. Interacts (via PAM-2 motif) with poly(A)-binding protein PABPC1 (via PABC domain), conferring substrate specificity of the enzyme complex. Interacts with the GW182 family proteins TNRC6A, TNRC6B and TNRC6C. Interacts with YTHDF3. Interacts with PAN2. Interacts (via N-terminus) with PABPC1 at lower efficiency than isoform 3. As to quaternary structure, interacts with PAN2. Interacts (via N-terminus) with PABPC1 at higher efficiency than isoform 1.

It is found in the cytoplasm. The protein localises to the P-body. Its subcellular location is the nucleus. Regulatory subunit of the poly(A)-nuclease (PAN) deadenylation complex, one of two cytoplasmic mRNA deadenylases involved in general and miRNA-mediated mRNA turnover. PAN specifically shortens poly(A) tails of RNA and the activity is stimulated by poly(A)-binding protein (PABP). PAN deadenylation is followed by rapid degradation of the shortened mRNA tails by the CCR4-NOT complex. Deadenylated mRNAs are then degraded by two alternative mechanisms, namely exosome-mediated 3'-5' exonucleolytic degradation, or deadenylation-dependent mRNA decapping and subsequent 5'-3' exonucleolytic degradation by XRN1. PAN3 acts as a regulator for PAN activity, recruiting the catalytic subunit PAN2 to mRNA via its interaction with RNA and PABP, and to miRNA targets via its interaction with GW182 family proteins. In terms of biological role, decreases PAN2-mediated deadenylation, possibly by preventing progression into the second CCR4-NOT mediated stage of biphasic deadenylation. Has a significant effect on mRNA stability, generally stabilizing a subset of the transcriptome. Stabilizes mRNAs degraded by the AU-rich element (ARE)-mediated mRNA decay pathway but promotes degradation of mRNAs by the microRNA-mediated pathway. Its activity influences mRNP remodeling, specifically reducing formation of a subset of P-bodies containing GW220, an isoform of TNRC6A. Its function is as follows. Enhances PAN2 deadenylase activity and has an extensive effect on mRNA stability, generally enhancing mRNA decay across the transcriptome by multiple pathways, including the AU-rich element (ARE)-mediated pathway, microRNA-mediated pathway and the nonsense-mediated pathway (NMD). Its activity is required for efficient P-body formation. May be involved in regulating mRNAs of genes involved in cell cycle progression and cell proliferation. This chain is PAN2-PAN3 deadenylation complex subunit Pan3, found in Mus musculus (Mouse).